Consider the following 146-residue polypeptide: Putative pre-16S rRNA nuclease (146 aa).

It belongs to the YqgF nuclease family.

The protein resides in the cytoplasm. In terms of biological role, could be a nuclease involved in processing of the 5'-end of pre-16S rRNA. This is Putative pre-16S rRNA nuclease from Paraburkholderia xenovorans (strain LB400).